Reading from the N-terminus, the 556-residue chain is Urocanate hydratase (556 aa).

NAD(+) contacts are provided by residues 53–54 (GG), glutamine 131, 177–179 (GMG), glutamate 197, 243–244 (NA), 264–268 (QTSAH), 274–275 (YL), and tyrosine 323. Cysteine 411 is a catalytic residue. Position 493 (glycine 493) interacts with NAD(+).

It belongs to the urocanase family. Requires NAD(+) as cofactor.

It localises to the cytoplasm. It catalyses the reaction 4-imidazolone-5-propanoate = trans-urocanate + H2O. It functions in the pathway amino-acid degradation; L-histidine degradation into L-glutamate; N-formimidoyl-L-glutamate from L-histidine: step 2/3. Functionally, catalyzes the conversion of urocanate to 4-imidazolone-5-propionate. The polypeptide is Urocanate hydratase (Pseudomonas fluorescens (strain SBW25)).